Reading from the N-terminus, the 617-residue chain is MAFPHRPDAPELPDFSMLKRLARDQLIYLLEQLPGKKDLFIEADLMSPLDRIANVSILKQHEVDKLYKVENKPALSSNEQLCFLVRPRIKNMRYIASLVNADKLAGRTRKYKVIFSPQKFYACEMVLEEEGIYGDVSCDEWAFSLLPLDVDLLSMELPEFFRDYFLEGDQRWINTVAQALHLLSTLYGPFPNCYGIGRCAKMAYELWRNLEEEEDGETKGRRPEIGHIFLLDRDVDFVTALCSQVVYEGLVDDTFRIKCGSVDFGPEVTSSDKSLKVLLNAEDKVFNEIRNEHFSNVFGFLSQKARNLQAQYDRRRGMDIKQMKNFVSQELKGLKQEHRLLSLHIGACESIMKKKTKQDFQELIKTEHALLEGFNIRESTSYIEEHIDRQVSPIESLRLMCLLSITENGLIPKDYRSLKTQYLQSYGPEHLLTFSNLRRAGLLTEQAPGDTLTAVESKVSKLVTDKAAGKITDAFSSLAKRSNFRAISKKLNLIPRVDGEYDLKVPRDMAYVFGGAYVPLSCRIIEQVLERRSWQGLDEVVRLLNCSDFAFTDMTKEDKASSESLRLILVVFLGGCTFSEISALRFLGREKGYRFIFLTTAVTNSARLMEAMSEVKA.

Position 2 is an N-acetylalanine (alanine 2).

It belongs to the STXBP/unc-18/SEC1 family. As to quaternary structure, interacts with RAB11A and VIPAS39. Interacts with RAB25. Associates with adapter protein complex 3 (AP-3), clathrin:AP-3 and clathrin:HGS complexes. In terms of assembly, (Microbial infection) Interacts with M.tuberculosis PtpA. In terms of processing, phosphorylated on tyrosine residues. Post-translationally, (Microbial infection) Dephosphorylated by M.tuberculosis PtpA, which induces the reduction of host phagolysosome fusion in M.tuberculosis-infected macrophages. As to expression, ubiquitous; highly expressed in testis and low expression in the lung.

It localises to the late endosome membrane. The protein resides in the lysosome membrane. It is found in the early endosome. Its subcellular location is the cytoplasmic vesicle. The protein localises to the clathrin-coated vesicle. It localises to the recycling endosome. In terms of biological role, may play a role in vesicle-mediated protein trafficking to lysosomal compartments and in membrane docking/fusion reactions of late endosomes/lysosomes. Required for proper trafficking and targeting of the collagen-modifying enzyme lysyl hydroxylase 3 (LH3) to intracellular collagen. Mediates phagolysosomal fusion in macrophages. Proposed to be involved in endosomal maturation implicating VIPAS39. In epithelial cells, the VPS33B:VIPAS39 complex may play a role in the apical recycling pathway and in the maintenance of the apical-basolateral polarity. Seems to be involved in the sorting of specific cargos from the trans-Golgi network to alpha-granule-destined multivesicular bodies (MVBs) promoting MVBs maturation in megakaryocytes. This Homo sapiens (Human) protein is Vacuolar protein sorting-associated protein 33B (VPS33B).